The sequence spans 212 residues: Large ribosomal subunit protein uL3 (212 aa).

An N5-methylglutamine modification is found at Q153.

The protein belongs to the universal ribosomal protein uL3 family. Part of the 50S ribosomal subunit. Forms a cluster with proteins L14 and L19. In terms of processing, methylated by PrmB.

Functionally, one of the primary rRNA binding proteins, it binds directly near the 3'-end of the 23S rRNA, where it nucleates assembly of the 50S subunit. This chain is Large ribosomal subunit protein uL3, found in Shewanella sediminis (strain HAW-EB3).